The chain runs to 162 residues: Probable chemoreceptor glutamine deamidase CheD 2 (162 aa).

It belongs to the CheD family.

It carries out the reaction L-glutaminyl-[protein] + H2O = L-glutamyl-[protein] + NH4(+). Its function is as follows. Probably deamidates glutamine residues to glutamate on methyl-accepting chemotaxis receptors (MCPs), playing an important role in chemotaxis. The sequence is that of Probable chemoreceptor glutamine deamidase CheD 2 from Geobacter metallireducens (strain ATCC 53774 / DSM 7210 / GS-15).